Reading from the N-terminus, the 372-residue chain is Chaperone protein DnaJ (372 aa).

One can recognise a J domain in the interval 5–70; that stretch reads DYYDLLEVGR…EKRAGYDRYG (66 aa). Residues 134–212 form a CR-type zinc finger; that stretch reads GIQAPIHYVT…CGGSGRRRDE (79 aa). Positions 147, 150, 164, 167, 186, 189, 200, and 203 each coordinate Zn(2+). CXXCXGXG motif repeat units lie at residues 147 to 154, 164 to 171, 186 to 193, and 200 to 207; these read CDTCQGTG, CHTCQGSG, CTTCYGEG, and CKKCGGSG.

This sequence belongs to the DnaJ family. In terms of assembly, homodimer. The cofactor is Zn(2+).

Its subcellular location is the cytoplasm. Participates actively in the response to hyperosmotic and heat shock by preventing the aggregation of stress-denatured proteins and by disaggregating proteins, also in an autonomous, DnaK-independent fashion. Unfolded proteins bind initially to DnaJ; upon interaction with the DnaJ-bound protein, DnaK hydrolyzes its bound ATP, resulting in the formation of a stable complex. GrpE releases ADP from DnaK; ATP binding to DnaK triggers the release of the substrate protein, thus completing the reaction cycle. Several rounds of ATP-dependent interactions between DnaJ, DnaK and GrpE are required for fully efficient folding. Also involved, together with DnaK and GrpE, in the DNA replication of plasmids through activation of initiation proteins. This chain is Chaperone protein DnaJ, found in Wolbachia sp. subsp. Drosophila simulans (strain wRi).